The sequence spans 117 residues: Aspartate 1-decarboxylase (117 aa).

The active-site Schiff-base intermediate with substrate; via pyruvic acid is S25. S25 is modified (pyruvic acid (Ser)). T57 serves as a coordination point for substrate. Y58 (proton donor) is an active-site residue. 73–75 (GAA) contributes to the substrate binding site.

The protein belongs to the PanD family. As to quaternary structure, heterooctamer of four alpha and four beta subunits. Requires pyruvate as cofactor. In terms of processing, is synthesized initially as an inactive proenzyme, which is activated by self-cleavage at a specific serine bond to produce a beta-subunit with a hydroxyl group at its C-terminus and an alpha-subunit with a pyruvoyl group at its N-terminus.

It is found in the cytoplasm. It carries out the reaction L-aspartate + H(+) = beta-alanine + CO2. The protein operates within cofactor biosynthesis; (R)-pantothenate biosynthesis; beta-alanine from L-aspartate: step 1/1. Its function is as follows. Catalyzes the pyruvoyl-dependent decarboxylation of aspartate to produce beta-alanine. The sequence is that of Aspartate 1-decarboxylase from Bacteroides thetaiotaomicron (strain ATCC 29148 / DSM 2079 / JCM 5827 / CCUG 10774 / NCTC 10582 / VPI-5482 / E50).